A 280-amino-acid chain; its full sequence is 2-dehydro-3-deoxyphosphooctonate aldolase (280 aa).

Belongs to the KdsA family.

Its subcellular location is the cytoplasm. It carries out the reaction D-arabinose 5-phosphate + phosphoenolpyruvate + H2O = 3-deoxy-alpha-D-manno-2-octulosonate-8-phosphate + phosphate. It participates in carbohydrate biosynthesis; 3-deoxy-D-manno-octulosonate biosynthesis; 3-deoxy-D-manno-octulosonate from D-ribulose 5-phosphate: step 2/3. It functions in the pathway bacterial outer membrane biogenesis; lipopolysaccharide biosynthesis. The protein is 2-dehydro-3-deoxyphosphooctonate aldolase of Neisseria meningitidis serogroup A / serotype 4A (strain DSM 15465 / Z2491).